Consider the following 115-residue polypeptide: Somatostatin-2 (115 aa).

An N-terminal signal peptide occupies residues 1–18 (MKVCRIHCALALLGLALA). A propeptide spanning residues 19-87 (ICSQGAASQP…KEDLRVELER (69 aa)) is cleaved from the precursor. A disulfide bridge connects residues cysteine 104 and cysteine 115.

This sequence belongs to the somatostatin family.

The protein localises to the secreted. Functionally, somatostatin inhibits the release of somatotropin. In Oncorhynchus mykiss (Rainbow trout), this protein is Somatostatin-2 (sst2).